The sequence spans 449 residues: NADP-specific glutamate dehydrogenase (449 aa).

The substrate site is built by Lys92, Gln113, and Lys116. The Proton donor role is filled by Lys128. Gly167 serves as a coordination point for substrate. Residues Thr211 and Asn242 each coordinate NADP(+). Ser380 is a binding site for substrate.

Belongs to the Glu/Leu/Phe/Val dehydrogenases family. In terms of assembly, homohexamer.

The catalysed reaction is L-glutamate + NADP(+) + H2O = 2-oxoglutarate + NH4(+) + NADPH + H(+). Functionally, catalyzes the reversible oxidative deamination of glutamate to alpha-ketoglutarate and ammonia. The chain is NADP-specific glutamate dehydrogenase (gdhA) from Haemophilus influenzae (strain ATCC 51907 / DSM 11121 / KW20 / Rd).